The following is a 119-amino-acid chain: Large ribosomal subunit protein bL12 (119 aa).

The protein belongs to the bacterial ribosomal protein bL12 family. Homodimer. Part of the ribosomal stalk of the 50S ribosomal subunit. Forms a multimeric L10(L12)X complex, where L10 forms an elongated spine to which 2 to 4 L12 dimers bind in a sequential fashion. Binds GTP-bound translation factors.

Functionally, forms part of the ribosomal stalk which helps the ribosome interact with GTP-bound translation factors. Is thus essential for accurate translation. This is Large ribosomal subunit protein bL12 from Bacillus anthracis (strain A0248).